A 317-amino-acid chain; its full sequence is Phospho-N-acetylmuramoyl-pentapeptide-transferase (317 aa).

A run of 9 helical transmembrane segments spans residues 3 to 23, 48 to 68, 72 to 92, 112 to 132, 141 to 161, 171 to 191, 193 to 213, 238 to 258, and 297 to 317; these read VIIYSVLISFLFSILQGPLFI, GTPTMGGIIFITTAIIAMIIM, LNSNAVFAFVCFFSFAMIGLI, FLLQIIVSAAISYYAYIRFGS, ITWTLPPIVYMAAVVFYFVAV, LDGLASSVTILVVTFFTVVSF, WHQYELSVFCGIIVGILLGFL, AIALVLKLPLLVIIVGGIYVI, and VVSVFSIVTVILCLIAFLSLI.

The protein belongs to the glycosyltransferase 4 family. MraY subfamily. The cofactor is Mg(2+).

The protein localises to the cell membrane. The enzyme catalyses UDP-N-acetyl-alpha-D-muramoyl-L-alanyl-gamma-D-glutamyl-meso-2,6-diaminopimeloyl-D-alanyl-D-alanine + di-trans,octa-cis-undecaprenyl phosphate = di-trans,octa-cis-undecaprenyl diphospho-N-acetyl-alpha-D-muramoyl-L-alanyl-D-glutamyl-meso-2,6-diaminopimeloyl-D-alanyl-D-alanine + UMP. Its pathway is cell wall biogenesis; peptidoglycan biosynthesis. Catalyzes the initial step of the lipid cycle reactions in the biosynthesis of the cell wall peptidoglycan: transfers peptidoglycan precursor phospho-MurNAc-pentapeptide from UDP-MurNAc-pentapeptide onto the lipid carrier undecaprenyl phosphate, yielding undecaprenyl-pyrophosphoryl-MurNAc-pentapeptide, known as lipid I. The protein is Phospho-N-acetylmuramoyl-pentapeptide-transferase of Clostridium acetobutylicum (strain ATCC 824 / DSM 792 / JCM 1419 / IAM 19013 / LMG 5710 / NBRC 13948 / NRRL B-527 / VKM B-1787 / 2291 / W).